The following is a 91-amino-acid chain: Sm-like protein LSM6A (91 aa).

Residues 14–86 (TPADFLKSIR…VLYISTVNMT (73 aa)) form the Sm domain.

Belongs to the snRNP Sm proteins family. As to quaternary structure, component of the heptameric LSM1-LSM7 complex that forms a seven-membered ring structure with a donut shape. The LSM subunits are arranged in the order LSM1, LSM2, LSM3, LSM6, LSM5, LSM7 and LSM4. Component of the heptameric LSM2-LSM8 complex that forms a seven-membered ring structure with a donut shape. The LSM subunits are arranged in the order LSM8, LSM2, LSM3, LSM6, LSM5, LSM7 and LSM4. LSM6A subunit interacts only with its two neighboring subunits, LSM3A or LSM3B and LSM5. In terms of tissue distribution, expressed in roots, leaves, stems, flowers and siliques.

It localises to the cytoplasm. It is found in the nucleus. Its function is as follows. Component of LSM protein complexes, which are involved in RNA processing. Component of the cytoplasmic LSM1-LSM7 complex which is involved in mRNA degradation by promoting decapping and leading to accurate 5'-3' mRNA decay. The cytoplasmic LSM1-LSM7 complex regulates developmental gene expression by the decapping of specific development-related transcripts. Component of the nuclear LSM2-LSM8 complex which is involved splicing nuclear mRNAs. LSM2-LSM8 binds directly to the U6 small nuclear RNAs (snRNAs) and is essential for accurate splicing of selected development-related mRNAs through the stabilization of the spliceosomal U6 snRNA. Plays a critical role in the regulation of development-related gene expression. This Arabidopsis thaliana (Mouse-ear cress) protein is Sm-like protein LSM6A.